We begin with the raw amino-acid sequence, 225 residues long: 3-dehydroquinate dehydratase (225 aa).

3-dehydroquinate-binding positions include Ser-6, 30–32 (EWR), and Arg-62. His-118 serves as the catalytic Proton donor/acceptor. Lys-143 (schiff-base intermediate with substrate) is an active-site residue. Arg-186, Ser-205, and Gln-209 together coordinate 3-dehydroquinate.

It belongs to the type-I 3-dehydroquinase family. In terms of assembly, homodimer.

It catalyses the reaction 3-dehydroquinate = 3-dehydroshikimate + H2O. It functions in the pathway metabolic intermediate biosynthesis; chorismate biosynthesis; chorismate from D-erythrose 4-phosphate and phosphoenolpyruvate: step 3/7. Involved in the third step of the chorismate pathway, which leads to the biosynthesis of aromatic amino acids. Catalyzes the cis-dehydration of 3-dehydroquinate (DHQ) and introduces the first double bond of the aromatic ring to yield 3-dehydroshikimate. This is 3-dehydroquinate dehydratase from Streptococcus pneumoniae (strain P1031).